The primary structure comprises 87 residues: UPF0237 protein YjhC (87 aa).

The region spanning 4 to 76 (VVTVVGADKI…EALGVNIHVQ (73 aa)) is the ACT domain.

The protein belongs to the UPF0237 family.

The protein is UPF0237 protein YjhC (yjhC) of Lactococcus lactis subsp. lactis (strain IL1403) (Streptococcus lactis).